The chain runs to 225 residues: Uracil-DNA glycosylase (225 aa).

Catalysis depends on Asp-65, which acts as the Proton acceptor.

This sequence belongs to the uracil-DNA glycosylase (UDG) superfamily. UNG family.

The protein resides in the cytoplasm. The enzyme catalyses Hydrolyzes single-stranded DNA or mismatched double-stranded DNA and polynucleotides, releasing free uracil.. Its function is as follows. Excises uracil residues from the DNA which can arise as a result of misincorporation of dUMP residues by DNA polymerase or due to deamination of cytosine. The chain is Uracil-DNA glycosylase from Clostridium perfringens (strain ATCC 13124 / DSM 756 / JCM 1290 / NCIMB 6125 / NCTC 8237 / Type A).